The sequence spans 166 residues: NAD(P)H-quinone oxidoreductase subunit I, chloroplastic (166 aa).

4Fe-4S ferredoxin-type domains are found at residues 55-84 (GRIHFEFDKCIACEVCVRVCPIDLPVVDWK) and 95-124 (LNYSIDFGICIFCGNCVEYCPTNCLSMTEE). [4Fe-4S] cluster-binding residues include cysteine 64, cysteine 67, cysteine 70, cysteine 74, cysteine 104, cysteine 107, cysteine 110, and cysteine 114.

The protein belongs to the complex I 23 kDa subunit family. In terms of assembly, NDH is composed of at least 16 different subunits, 5 of which are encoded in the nucleus. [4Fe-4S] cluster is required as a cofactor.

The protein resides in the plastid. Its subcellular location is the chloroplast thylakoid membrane. It carries out the reaction a plastoquinone + NADH + (n+1) H(+)(in) = a plastoquinol + NAD(+) + n H(+)(out). The enzyme catalyses a plastoquinone + NADPH + (n+1) H(+)(in) = a plastoquinol + NADP(+) + n H(+)(out). NDH shuttles electrons from NAD(P)H:plastoquinone, via FMN and iron-sulfur (Fe-S) centers, to quinones in the photosynthetic chain and possibly in a chloroplast respiratory chain. The immediate electron acceptor for the enzyme in this species is believed to be plastoquinone. Couples the redox reaction to proton translocation, and thus conserves the redox energy in a proton gradient. The protein is NAD(P)H-quinone oxidoreductase subunit I, chloroplastic of Tridax balbisioides (Coatbuttons).